The primary structure comprises 1430 residues: Gag-Pol polyprotein (1430 aa).

Gly-2 is lipidated: N-myristoyl glycine; by host. Residues 7 to 31 (ILSGGKLDEWEKIQLRPGGKKRYKM) are interaction with Gp41. The interaction with host CALM1 stretch occupies residues 8 to 43 (LSGGKLDEWEKIQLRPGGKKRYKMKHLIWASRELER). The tract at residues 12–19 (KLDEWEKI) is interaction with host AP3D1. Residues 14–33 (DEWEKIQLRPGGKKRYKMKH) form an interaction with membrane phosphatidylinositol 4,5-bisphosphate and RNA region. Positions 16 to 22 (WEKIQLR) match the Nuclear export signal motif. Positions 26–32 (KKRYKMK) match the Nuclear localization signal motif. The interaction with membrane phosphatidylinositol 4,5-bisphosphate stretch occupies residues 73–77 (EELKS). A Phosphotyrosine; by host modification is found at Tyr-128. The tract at residues 185 to 223 (NTVGGHQAAMQMLKDTINEEAAEWDRLHPVHAGPAPPGQ) is interaction with human PPIA/CYPA and NUP153. The tract at residues 273-359 (YSPVSILDIK…GGPSHKARVL (87 aa)) is dimerization/Multimerization of capsid protein p24. 2 CCHC-type zinc fingers span residues 384–401 (VKCFNCGKEGHIARNCRA) and 405–422 (KGCWKCGREGHQMKDCTE). The disordered stretch occupies residues 438-475 (EARKFPSEQTRANSPTSRELRVQRGDNPLSEAGAERRG). The segment covering 444 to 454 (SEQTRANSPTS) has biased composition (polar residues). The segment at 483–487 (PQITL) is dimerization of protease. Positions 502 to 571 (KEALLDTGAD…TPVNIIGRNM (70 aa)) constitute a Peptidase A2 domain. The For protease activity; shared with dimeric partner role is filled by Asp-507. 2 dimerization of protease regions span residues 531-537 (GIGGFIK) and 570-582 (NMLTQIGCTLNFP). In terms of domain architecture, Reverse transcriptase spans 625–815 (EGKISKIGPE…PPFLWMGHEL (191 aa)). Residues Asp-691, Asp-766, and Asp-767 each coordinate Mg(2+). Residues 808–816 (FLWMGHELH) form an RT 'primer grip' region. A Tryptophan repeat motif motif is present at residues 980 to 996 (WDTWWTDYWQATWIPEW). Residues 1016–1139 (IAGADTFYVD…VDKLVSAGVR (124 aa)) form the RNase H type-1 domain. Residues Asp-1025, Glu-1060, Asp-1080, and Asp-1131 each coordinate Mg(2+). The segment at 1145 to 1186 (DGIDKAQEEHEKYHNNWRAMASDFNLPPIVAKEIVASCDKCQ) adopts an Integrase-type zinc-finger fold. Residues His-1154, His-1158, Cys-1182, and Cys-1185 each coordinate Zn(2+). Residues 1196 to 1346 (VDCSPGIWQL…SAGERIIDII (151 aa)) form the Integrase catalytic domain. Residues Asp-1206, Asp-1258, and Glu-1294 each coordinate Mg(2+). Positions 1365–1412 (FRVYYRDSRNPVWKGPAKLLWKGEGAVVIQDNSEIKIVPRRKAKIIRD) form a DNA-binding region, integrase-type.

Homotrimer; further assembles as hexamers of trimers. Interacts with gp41 (via C-terminus). Interacts with host CALM1; this interaction induces a conformational change in the Matrix protein, triggering exposure of the myristate group. Interacts with host AP3D1; this interaction allows the polyprotein trafficking to multivesicular bodies during virus assembly. Part of the pre-integration complex (PIC) which is composed of viral genome, matrix protein, Vpr and integrase. In terms of assembly, homodimer; the homodimer further multimerizes as homohexamers or homopentamers. Interacts with human PPIA/CYPA; This interaction stabilizes the capsid. Interacts with human NUP153. Interacts with host PDZD8; this interaction stabilizes the capsid. Interacts with monkey TRIM5; this interaction destabilizes the capsid. As to quaternary structure, homodimer, whose active site consists of two apposed aspartic acid residues. Heterodimer of p66 RT and p51 RT (RT p66/p51). Heterodimerization of RT is essential for DNA polymerase activity. The overall folding of the subdomains is similar in p66 RT and p51 RT but the spatial arrangements of the subdomains are dramatically different. In terms of assembly, homotetramer; may further associate as a homohexadecamer. Part of the pre-integration complex (PIC) which is composed of viral genome, matrix protein, Vpr and integrase. Interacts with human SMARCB1/INI1 and human PSIP1/LEDGF isoform 1. Interacts with human KPNA3; this interaction might play a role in nuclear import of the pre-integration complex. Interacts with human NUP153; this interaction might play a role in nuclear import of the pre-integration complex. It depends on Mg(2+) as a cofactor. In terms of processing, specific enzymatic cleavages by the viral protease yield mature proteins. The protease is released by autocatalytic cleavage. The polyprotein is cleaved during and after budding, this process is termed maturation. Proteolytic cleavage of p66 RT removes the RNase H domain to yield the p51 RT subunit. Nucleocapsid protein p7 might be further cleaved after virus entry. Tyrosine phosphorylated presumably in the virion by a host kinase. Phosphorylation is apparently not a major regulator of membrane association. Post-translationally, phosphorylated possibly by host MAPK1; this phosphorylation is necessary for Pin1-mediated virion uncoating. In terms of processing, methylated by host PRMT6, impairing its function by reducing RNA annealing and the initiation of reverse transcription.

It localises to the host cell membrane. The protein resides in the host endosome. It is found in the host multivesicular body. Its subcellular location is the virion membrane. The protein localises to the host nucleus. It localises to the host cytoplasm. The protein resides in the virion. The catalysed reaction is Specific for a P1 residue that is hydrophobic, and P1' variable, but often Pro.. The enzyme catalyses Endohydrolysis of RNA in RNA/DNA hybrids. Three different cleavage modes: 1. sequence-specific internal cleavage of RNA. Human immunodeficiency virus type 1 and Moloney murine leukemia virus enzymes prefer to cleave the RNA strand one nucleotide away from the RNA-DNA junction. 2. RNA 5'-end directed cleavage 13-19 nucleotides from the RNA end. 3. DNA 3'-end directed cleavage 15-20 nucleotides away from the primer terminus.. It catalyses the reaction 3'-end directed exonucleolytic cleavage of viral RNA-DNA hybrid.. It carries out the reaction DNA(n) + a 2'-deoxyribonucleoside 5'-triphosphate = DNA(n+1) + diphosphate. Protease: The viral protease is inhibited by many synthetic protease inhibitors (PIs), such as amprenavir, atazanavir, indinavir, loprinavir, nelfinavir, ritonavir and saquinavir. Use of protease inhibitors in tritherapy regimens permit more ambitious therapeutic strategies. Reverse transcriptase/ribonuclease H: RT can be inhibited either by nucleoside RT inhibitors (NRTIs) or by non nucleoside RT inhibitors (NNRTIs). NRTIs act as chain terminators, whereas NNRTIs inhibit DNA polymerization by binding a small hydrophobic pocket near the RT active site and inducing an allosteric change in this region. Classical NRTIs are abacavir, adefovir (PMEA), didanosine (ddI), lamivudine (3TC), stavudine (d4T), tenofovir (PMPA), zalcitabine (ddC), and zidovudine (AZT). Classical NNRTIs are atevirdine (BHAP U-87201E), delavirdine, efavirenz (DMP-266), emivirine (I-EBU), and nevirapine (BI-RG-587). The tritherapies used as a basic effective treatment of AIDS associate two NRTIs and one NNRTI. Functionally, mediates, with Gag polyprotein, the essential events in virion assembly, including binding the plasma membrane, making the protein-protein interactions necessary to create spherical particles, recruiting the viral Env proteins, and packaging the genomic RNA via direct interactions with the RNA packaging sequence (Psi). Gag-Pol polyprotein may regulate its own translation, by the binding genomic RNA in the 5'-UTR. At low concentration, the polyprotein would promote translation, whereas at high concentration, the polyprotein would encapsidate genomic RNA and then shut off translation. In terms of biological role, targets the polyprotein to the plasma membrane via a multipartite membrane-binding signal, that includes its myristoylated N-terminus. Matrix protein is part of the pre-integration complex. Implicated in the release from host cell mediated by Vpu. Binds to RNA. Its function is as follows. Forms the conical core that encapsulates the genomic RNA-nucleocapsid complex in the virion. Most core are conical, with only 7% tubular. The core is constituted by capsid protein hexamer subunits. The core is disassembled soon after virion entry. Host restriction factors such as TRIM5-alpha or TRIMCyp bind retroviral capsids and cause premature capsid disassembly, leading to blocks in reverse transcription. Capsid restriction by TRIM5 is one of the factors which restricts HIV-1 to the human species. Host PIN1 apparently facilitates the virion uncoating. On the other hand, interactions with PDZD8 or CYPA stabilize the capsid. Encapsulates and protects viral dimeric unspliced genomic RNA (gRNA). Binds these RNAs through its zinc fingers. Acts as a nucleic acid chaperone which is involved in rearangement of nucleic acid secondary structure during gRNA retrotranscription. Also facilitates template switch leading to recombination. As part of the polyprotein, participates in gRNA dimerization, packaging, tRNA incorporation and virion assembly. Functionally, aspartyl protease that mediates proteolytic cleavages of Gag and Gag-Pol polyproteins during or shortly after the release of the virion from the plasma membrane. Cleavages take place as an ordered, step-wise cascade to yield mature proteins. This process is called maturation. Displays maximal activity during the budding process just prior to particle release from the cell. Also cleaves Nef and Vif, probably concomitantly with viral structural proteins on maturation of virus particles. Hydrolyzes host EIF4GI and PABP1 in order to shut off the capped cellular mRNA translation. The resulting inhibition of cellular protein synthesis serves to ensure maximal viral gene expression and to evade host immune response. Also mediates cleavage of host YTHDF3. Mediates cleavage of host CARD8, thereby activating the CARD8 inflammasome, leading to the clearance of latent HIV-1 in patient CD4(+) T-cells after viral reactivation; in contrast, HIV-1 can evade CARD8-sensing when its protease remains inactive in infected cells prior to viral budding. In terms of biological role, multifunctional enzyme that converts the viral RNA genome into dsDNA in the cytoplasm, shortly after virus entry into the cell. This enzyme displays a DNA polymerase activity that can copy either DNA or RNA templates, and a ribonuclease H (RNase H) activity that cleaves the RNA strand of RNA-DNA heteroduplexes in a partially processive 3' to 5' endonucleasic mode. Conversion of viral genomic RNA into dsDNA requires many steps. A tRNA(3)-Lys binds to the primer-binding site (PBS) situated at the 5'-end of the viral RNA. RT uses the 3' end of the tRNA primer to perform a short round of RNA-dependent minus-strand DNA synthesis. The reading proceeds through the U5 region and ends after the repeated (R) region which is present at both ends of viral RNA. The portion of the RNA-DNA heteroduplex is digested by the RNase H, resulting in a ssDNA product attached to the tRNA primer. This ssDNA/tRNA hybridizes with the identical R region situated at the 3' end of viral RNA. This template exchange, known as minus-strand DNA strong stop transfer, can be either intra- or intermolecular. RT uses the 3' end of this newly synthesized short ssDNA to perform the RNA-dependent minus-strand DNA synthesis of the whole template. RNase H digests the RNA template except for two polypurine tracts (PPTs) situated at the 5'-end and near the center of the genome. It is not clear if both polymerase and RNase H activities are simultaneous. RNase H probably can proceed both in a polymerase-dependent (RNA cut into small fragments by the same RT performing DNA synthesis) and a polymerase-independent mode (cleavage of remaining RNA fragments by free RTs). Secondly, RT performs DNA-directed plus-strand DNA synthesis using the PPTs that have not been removed by RNase H as primers. PPTs and tRNA primers are then removed by RNase H. The 3' and 5' ssDNA PBS regions hybridize to form a circular dsDNA intermediate. Strand displacement synthesis by RT to the PBS and PPT ends produces a blunt ended, linear dsDNA copy of the viral genome that includes long terminal repeats (LTRs) at both ends. Its function is as follows. Catalyzes viral DNA integration into the host chromosome, by performing a series of DNA cutting and joining reactions. This enzyme activity takes place after virion entry into a cell and reverse transcription of the RNA genome in dsDNA. The first step in the integration process is 3' processing. This step requires a complex comprising the viral genome, matrix protein, Vpr and integrase. This complex is called the pre-integration complex (PIC). The integrase protein removes 2 nucleotides from each 3' end of the viral DNA, leaving recessed CA OH's at the 3' ends. In the second step, the PIC enters cell nucleus. This process is mediated through integrase and Vpr proteins, and allows the virus to infect a non dividing cell. This ability to enter the nucleus is specific of lentiviruses, other retroviruses cannot and rely on cell division to access cell chromosomes. In the third step, termed strand transfer, the integrase protein joins the previously processed 3' ends to the 5' ends of strands of target cellular DNA at the site of integration. The 5'-ends are produced by integrase-catalyzed staggered cuts, 5 bp apart. A Y-shaped, gapped, recombination intermediate results, with the 5'-ends of the viral DNA strands and the 3' ends of target DNA strands remaining unjoined, flanking a gap of 5 bp. The last step is viral DNA integration into host chromosome. This involves host DNA repair synthesis in which the 5 bp gaps between the unjoined strands are filled in and then ligated. Since this process occurs at both cuts flanking the HIV genome, a 5 bp duplication of host DNA is produced at the ends of HIV-1 integration. Alternatively, Integrase may catalyze the excision of viral DNA just after strand transfer, this is termed disintegration. The protein is Gag-Pol polyprotein (gag-pol) of Homo sapiens (Human).